The chain runs to 302 residues: NAD kinase 2 (302 aa).

The Proton acceptor role is filled by aspartate 78. NAD(+) contacts are provided by residues 78 to 79 (DG), 152 to 153 (NE), aspartate 182, 193 to 198 (TAYALS), and alanine 217.

It belongs to the NAD kinase family. The cofactor is a divalent metal cation.

Its subcellular location is the cytoplasm. It catalyses the reaction NAD(+) + ATP = ADP + NADP(+) + H(+). In terms of biological role, involved in the regulation of the intracellular balance of NAD and NADP, and is a key enzyme in the biosynthesis of NADP. Catalyzes specifically the phosphorylation on 2'-hydroxyl of the adenosine moiety of NAD to yield NADP. The sequence is that of NAD kinase 2 from Prochlorococcus marinus (strain MIT 9313).